The following is a 400-amino-acid chain: Enoyl-[acyl-carrier-protein] reductase [NADH] (400 aa).

NAD(+) contacts are provided by residues 48 to 53 (GASTGY), 74 to 75 (FE), 111 to 112 (DA), and 139 to 140 (LA). Tyr225 serves as a coordination point for substrate. Tyr235 functions as the Proton donor in the catalytic mechanism. NAD(+) is bound by residues Lys244 and 273–275 (VVT).

This sequence belongs to the TER reductase family. In terms of assembly, monomer.

The enzyme catalyses a 2,3-saturated acyl-[ACP] + NAD(+) = a (2E)-enoyl-[ACP] + NADH + H(+). It participates in lipid metabolism; fatty acid biosynthesis. In terms of biological role, involved in the final reduction of the elongation cycle of fatty acid synthesis (FAS II). Catalyzes the reduction of a carbon-carbon double bond in an enoyl moiety that is covalently linked to an acyl carrier protein (ACP). The sequence is that of Enoyl-[acyl-carrier-protein] reductase [NADH] from Burkholderia ambifaria (strain ATCC BAA-244 / DSM 16087 / CCUG 44356 / LMG 19182 / AMMD) (Burkholderia cepacia (strain AMMD)).